A 250-amino-acid polypeptide reads, in one-letter code: Phosphoribosylaminoimidazole-succinocarboxamide synthase (250 aa).

The protein belongs to the SAICAR synthetase family.

The catalysed reaction is 5-amino-1-(5-phospho-D-ribosyl)imidazole-4-carboxylate + L-aspartate + ATP = (2S)-2-[5-amino-1-(5-phospho-beta-D-ribosyl)imidazole-4-carboxamido]succinate + ADP + phosphate + 2 H(+). The protein operates within purine metabolism; IMP biosynthesis via de novo pathway; 5-amino-1-(5-phospho-D-ribosyl)imidazole-4-carboxamide from 5-amino-1-(5-phospho-D-ribosyl)imidazole-4-carboxylate: step 1/2. The protein is Phosphoribosylaminoimidazole-succinocarboxamide synthase of Bifidobacterium longum (strain DJO10A).